A 914-amino-acid polypeptide reads, in one-letter code: Protein GAMETE EXPRESSED 2 (914 aa).

2 Filamin repeats span residues Ile-249 to Val-382 and Ala-391 to Val-485. A helical membrane pass occupies residues Leu-893–Ile-913.

In tricellular pollen, expressed in mature sperm cells but not in the vegetative cell. In bicellular pollen, detected in the progenitor generative cell. Detected in the egg cell within the female gametophyte.

It is found in the cell membrane. The polypeptide is Protein GAMETE EXPRESSED 2 (GEX2) (Arabidopsis thaliana (Mouse-ear cress)).